Here is a 360-residue protein sequence, read N- to C-terminus: MSIEELARENVRTLTPYQSARRLGGNGDVWLNANEYPLPVEFQLTAQTLNRYPECQPKRVIERYAQYAGVKPEQVLVSRGADEGIELLIRAFCEPGRDAVLYCPPTYGMYSVSAETSGVECRTVQATDGWQLDLPAIAEQLDGVKVIFVCSPNNPTGQLINPQDLRTLLEMARGKAIVVADEAYIEFCPQATLAGWLGEYPHLVVLRTLSKAFALAGLRCGFTLANEEVINLLLKVIAPYPLSTPVADIAAQALSPEGITAMRERVAQVLANRDVLIAGLRETPCVEAVFDSETNYVLARITASSAVFKSLWDQGIILRDQNRQPTLSGCLRITVGTREECQRVIDALRDQPGLAATERV.

Lys-211 is subject to N6-(pyridoxal phosphate)lysine.

Belongs to the class-II pyridoxal-phosphate-dependent aminotransferase family. Histidinol-phosphate aminotransferase subfamily. In terms of assembly, homodimer. Pyridoxal 5'-phosphate is required as a cofactor.

The enzyme catalyses L-histidinol phosphate + 2-oxoglutarate = 3-(imidazol-4-yl)-2-oxopropyl phosphate + L-glutamate. It functions in the pathway amino-acid biosynthesis; L-histidine biosynthesis; L-histidine from 5-phospho-alpha-D-ribose 1-diphosphate: step 7/9. The chain is Histidinol-phosphate aminotransferase from Cronobacter sakazakii (strain ATCC BAA-894) (Enterobacter sakazakii).